The sequence spans 121 residues: Putative viral protein-binding protein C1 (121 aa).

The tract at residues 21–57 (PWDRTRGHPDVPWRNLTSSPTRPLAQPAGSCMPAEPS) is disordered.

Interacts with core protein of hepatitis B virus.

The chain is Putative viral protein-binding protein C1 from Homo sapiens (Human).